The primary structure comprises 264 residues: NADH-quinone oxidoreductase subunit B 1 (264 aa).

Residues cysteine 42, cysteine 43, cysteine 108, and cysteine 138 each contribute to the [4Fe-4S] cluster site.

Belongs to the complex I 20 kDa subunit family. As to quaternary structure, NDH-1 is composed of 14 different subunits. Subunits NuoB, C, D, E, F, and G constitute the peripheral sector of the complex. The cofactor is [4Fe-4S] cluster.

It localises to the cell membrane. It catalyses the reaction a quinone + NADH + 5 H(+)(in) = a quinol + NAD(+) + 4 H(+)(out). Its function is as follows. NDH-1 shuttles electrons from NADH, via FMN and iron-sulfur (Fe-S) centers, to quinones in the respiratory chain. The immediate electron acceptor for the enzyme in this species is believed to be ubiquinone. Couples the redox reaction to proton translocation (for every two electrons transferred, four hydrogen ions are translocated across the cytoplasmic membrane), and thus conserves the redox energy in a proton gradient. The sequence is that of NADH-quinone oxidoreductase subunit B 1 from Chloroflexus aurantiacus (strain ATCC 29366 / DSM 635 / J-10-fl).